Here is a 500-residue protein sequence, read N- to C-terminus: Trehalose-6-phosphate synthase (500 aa).

R28 serves as a coordination point for D-glucose 6-phosphate. 48–49 is a binding site for UDP-alpha-D-glucose; that stretch reads GG. D-glucose 6-phosphate contacts are provided by Y108 and D162. 2 residues coordinate UDP-alpha-D-glucose: R304 and K309. R342 provides a ligand contact to D-glucose 6-phosphate. 407–411 lines the UDP-alpha-D-glucose pocket; that stretch reads LVAKE.

It belongs to the glycosyltransferase 20 family. Homotetramer.

The catalysed reaction is ADP-alpha-D-glucose + D-glucose 6-phosphate = alpha,alpha-trehalose 6-phosphate + ADP + H(+). The enzyme catalyses CDP-alpha-D-glucose + D-glucose 6-phosphate = alpha,alpha-trehalose 6-phosphate + CDP + H(+). It catalyses the reaction GDP-alpha-D-glucose + D-glucose 6-phosphate = alpha,alpha-trehalose 6-phosphate + GDP + H(+). It carries out the reaction TDP-alpha-D-glucose + D-glucose 6-phosphate = 5-methyl-UDP + alpha,alpha-trehalose 6-phosphate + H(+). The catalysed reaction is D-glucose 6-phosphate + UDP-alpha-D-glucose = alpha,alpha-trehalose 6-phosphate + UDP + H(+). It participates in glycan biosynthesis; trehalose biosynthesis. Its function is as follows. Probably involved in the osmoprotection via the biosynthesis of trehalose and in the production of glycogen and alpha-glucan via the TreS-Pep2 branch involved in the biosynthesis of maltose-1-phosphate (M1P). Catalyzes the transfer of glucose from UDP-glucose (UDP-Glc) to D-glucose 6-phosphate (Glc-6-P) to form trehalose-6-phosphate. Probably also able to use ADP-Glc, CDP-Glc, GDP-Glc and TDP-Glc as glucosyl donors. This is Trehalose-6-phosphate synthase from Mycobacterium tuberculosis (strain CDC 1551 / Oshkosh).